Consider the following 673-residue polypeptide: Clotting factor G alpha subunit (673 aa).

The first 19 residues, 1-19 (MLVLLCCVVLHVGVARICC), serve as a signal peptide directing secretion. The GH16 domain maps to 27 to 257 (LVWSDEFTNG…YVRVYQDAST (231 aa)). Glutamate 137 functions as the Nucleophile in the catalytic mechanism. Glutamate 142 serves as the catalytic Proton donor. A glycan (N-linked (GlcNAc...) asparagine) is linked at asparagine 186. Residues 266 to 404 (LDGYYFVQNR…NQLSGQWKLI (139 aa)) enclose the Ricin B-type lectin domain. 2 CBM6 domains span residues 411-533 (KLIQ…IKIT) and 549-671 (KLIQ…IRIT).

This sequence belongs to the glycosyl hydrolase 16 family. As to quaternary structure, clotting factor G is a heterodimer composed of two non-covalently associated subunits, alpha and beta. In presence of (1-&gt;3)-beta-glucan, proteolytically cleaved into a 55kDa and a 17kDa forms. Expressed in hemocytes (at protein level).

Functionally, component of the heterodimer clotting factor G which may play a role in defense mechanisms against fungi. Initiates a (1-&gt;3)-beta-glucan-sensing clotting pathway whereby the alpha subunit binds to glucans containing (1-&gt;3)-beta linkages, which are components of the fungal cell wall, and the beta subunit catalyzes the activation of proclotting enzyme. The chain is Clotting factor G alpha subunit from Tachypleus tridentatus (Japanese horseshoe crab).